Here is a 187-residue protein sequence, read N- to C-terminus: Elongation factor P (187 aa).

Belongs to the elongation factor P family.

The protein localises to the cytoplasm. It functions in the pathway protein biosynthesis; polypeptide chain elongation. Involved in peptide bond synthesis. Stimulates efficient translation and peptide-bond synthesis on native or reconstituted 70S ribosomes in vitro. Probably functions indirectly by altering the affinity of the ribosome for aminoacyl-tRNA, thus increasing their reactivity as acceptors for peptidyl transferase. The sequence is that of Elongation factor P from Corynebacterium efficiens (strain DSM 44549 / YS-314 / AJ 12310 / JCM 11189 / NBRC 100395).